Consider the following 304-residue polypeptide: MSASTAAPARDRLRIAIQKNGRLAEPARSLLAACGLSWRQSRDKLFCYGESLPVDLLLVRDDDIPGLIADGVCDLGIVGQNELDEQASARRRAGLPAAYHAVRGVGFGQCRLMLAVPEEWDWQGVAQLAGKRIATSYPAILADWLERQGIDASVVELSGSVEIAPRLGTADLICDLVSSGATLAANQLKPVELVMESEAVLAGAVREPADARAALLAMLLRRMDGVLKLRDSKLLMFRAEQGNVDALRRLLPDADPLVQLPDDGNGALRLQTMCHGAVTWQRLEELERAGAQGLMVLTVERSLA.

Belongs to the ATP phosphoribosyltransferase family. Long subfamily. Mg(2+) serves as cofactor.

The protein resides in the cytoplasm. It carries out the reaction 1-(5-phospho-beta-D-ribosyl)-ATP + diphosphate = 5-phospho-alpha-D-ribose 1-diphosphate + ATP. The protein operates within amino-acid biosynthesis; L-histidine biosynthesis; L-histidine from 5-phospho-alpha-D-ribose 1-diphosphate: step 1/9. With respect to regulation, feedback inhibited by histidine. Functionally, catalyzes the condensation of ATP and 5-phosphoribose 1-diphosphate to form N'-(5'-phosphoribosyl)-ATP (PR-ATP). Has a crucial role in the pathway because the rate of histidine biosynthesis seems to be controlled primarily by regulation of HisG enzymatic activity. The protein is ATP phosphoribosyltransferase of Xanthomonas campestris pv. campestris (strain 8004).